The sequence spans 333 residues: Phosphoribosylformylglycinamidine cyclo-ligase (333 aa).

Belongs to the AIR synthase family.

The protein localises to the cytoplasm. The catalysed reaction is 2-formamido-N(1)-(5-O-phospho-beta-D-ribosyl)acetamidine + ATP = 5-amino-1-(5-phospho-beta-D-ribosyl)imidazole + ADP + phosphate + H(+). It functions in the pathway purine metabolism; IMP biosynthesis via de novo pathway; 5-amino-1-(5-phospho-D-ribosyl)imidazole from N(2)-formyl-N(1)-(5-phospho-D-ribosyl)glycinamide: step 2/2. The protein is Phosphoribosylformylglycinamidine cyclo-ligase of Methanosarcina acetivorans (strain ATCC 35395 / DSM 2834 / JCM 12185 / C2A).